A 540-amino-acid polypeptide reads, in one-letter code: Chaperonin GroEL 4 (540 aa).

Residues 29–32 (TLGP), 86–90 (DGTTT), Gly413, 477–479 (NAA), and Asp493 contribute to the ATP site.

The protein belongs to the chaperonin (HSP60) family. In terms of assembly, forms a cylinder of 14 subunits composed of two heptameric rings stacked back-to-back. Interacts with the co-chaperonin GroES.

The protein localises to the cytoplasm. The enzyme catalyses ATP + H2O + a folded polypeptide = ADP + phosphate + an unfolded polypeptide.. Its function is as follows. Together with its co-chaperonin GroES, plays an essential role in assisting protein folding. The GroEL-GroES system forms a nano-cage that allows encapsulation of the non-native substrate proteins and provides a physical environment optimized to promote and accelerate protein folding. The protein is Chaperonin GroEL 4 of Frankia alni (strain DSM 45986 / CECT 9034 / ACN14a).